The primary structure comprises 167 residues: Dihydrofolate reductase (167 aa).

The 162-residue stretch at 1–162 (MFISMWAQDK…YPHRFQKWQK (162 aa)) folds into the DHFR domain. NADP(+) is bound by residues A7 and 13 to 19 (LIGKDGL). D27 contributes to the substrate binding site. 45 to 46 (KT) is a binding site for NADP(+). R58 provides a ligand contact to substrate. Residues 64-65 (TT) and 99-106 (GGSRIFQA) contribute to the NADP(+) site. Substrate is bound at residue T117.

It belongs to the dihydrofolate reductase family.

It catalyses the reaction (6S)-5,6,7,8-tetrahydrofolate + NADP(+) = 7,8-dihydrofolate + NADPH + H(+). The protein operates within cofactor biosynthesis; tetrahydrofolate biosynthesis; 5,6,7,8-tetrahydrofolate from 7,8-dihydrofolate: step 1/1. Functionally, key enzyme in folate metabolism. Catalyzes an essential reaction for de novo glycine and purine synthesis, and for DNA precursor synthesis. The sequence is that of Dihydrofolate reductase (folA) from Enterococcus faecium (Streptococcus faecium).